Reading from the N-terminus, the 191-residue chain is Peptidyl-tRNA hydrolase (191 aa).

Position 15 (Tyr-15) interacts with tRNA. Residue His-20 is the Proton acceptor of the active site. 3 residues coordinate tRNA: Phe-66, Asn-68, and Asn-114.

Belongs to the PTH family. As to quaternary structure, monomer.

Its subcellular location is the cytoplasm. The enzyme catalyses an N-acyl-L-alpha-aminoacyl-tRNA + H2O = an N-acyl-L-amino acid + a tRNA + H(+). Functionally, hydrolyzes ribosome-free peptidyl-tRNAs (with 1 or more amino acids incorporated), which drop off the ribosome during protein synthesis, or as a result of ribosome stalling. Catalyzes the release of premature peptidyl moieties from peptidyl-tRNA molecules trapped in stalled 50S ribosomal subunits, and thus maintains levels of free tRNAs and 50S ribosomes. The polypeptide is Peptidyl-tRNA hydrolase (Streptococcus agalactiae serotype Ia (strain ATCC 27591 / A909 / CDC SS700)).